The primary structure comprises 1340 residues: TSET complex member tstE (1340 aa).

A compositionally biased stretch (low complexity) spans 56–67; it reads NQSQTSPNSNDG. 2 disordered regions span residues 56 to 75 and 110 to 131; these read NQSQTSPNSNDGNIGGGSGG and SGSGGGGSGSNSNIGGGGGGGQ. WD repeat units follow at residues 208–246, 250–294, 345–384, and 397–436; these read VNQILFNCLCFHPKSPILYAAIRNEVHFYDIITKSVIGK, DPTE…LQTI, GHKKPISAIAHHPAKTILASCSTDGQLKIWDTRNNMSFLN, and IEHSNHYFLVFEPTGKYLVMTGSSGLTLVYGDLTSQNPQE. The span at 1216–1251 shows a compositional bias: polar residues; it reads KSHMSSTTTLRRSPSIENIRTTSTTFDSSKFNTDNQ. Residues 1216–1340 are disordered; the sequence is KSHMSSTTTL…TPTPTTTLSS (125 aa). Over residues 1252–1275 the composition is skewed to acidic residues; sequence ELFDDDSDDDSDSGADADVDSENE. The segment covering 1286–1318 has biased composition (polar residues); it reads ASLQHNDNSSLTNITVTDNDSNLDQDITSNTGS. Positions 1328–1340 are enriched in low complexity; that stretch reads LSSTPTPTTTLSS.

In terms of assembly, component of the TSET complex, a heterohexamer composed of tstA, tstB, tstC, tstD, tstE and tstF, which may act in plasma membrane turnover. tstA, tstB, tstC and tstD are likely to be the core complex members with tstE and tstF acting as associated scaffold proteins.

In Dictyostelium discoideum (Social amoeba), this protein is TSET complex member tstE.